A 180-amino-acid chain; its full sequence is ATP synthase subunit delta (180 aa).

Belongs to the ATPase delta chain family. In terms of assembly, F-type ATPases have 2 components, F(1) - the catalytic core - and F(0) - the membrane proton channel. F(1) has five subunits: alpha(3), beta(3), gamma(1), delta(1), epsilon(1). F(0) has three main subunits: a(1), b(2) and c(10-14). The alpha and beta chains form an alternating ring which encloses part of the gamma chain. F(1) is attached to F(0) by a central stalk formed by the gamma and epsilon chains, while a peripheral stalk is formed by the delta and b chains.

Its subcellular location is the cell inner membrane. Functionally, f(1)F(0) ATP synthase produces ATP from ADP in the presence of a proton or sodium gradient. F-type ATPases consist of two structural domains, F(1) containing the extramembraneous catalytic core and F(0) containing the membrane proton channel, linked together by a central stalk and a peripheral stalk. During catalysis, ATP synthesis in the catalytic domain of F(1) is coupled via a rotary mechanism of the central stalk subunits to proton translocation. Its function is as follows. This protein is part of the stalk that links CF(0) to CF(1). It either transmits conformational changes from CF(0) to CF(1) or is implicated in proton conduction. The chain is ATP synthase subunit delta from Paracidovorax citrulli (strain AAC00-1) (Acidovorax citrulli).